A 240-amino-acid polypeptide reads, in one-letter code: MDLHLIFGPTCTGKTTTAIALAQQTGLPVLSLDRVQCCPQLSTGSGRPTVEELKGTTRLYLDDRPLVEGIIAAKQAHHRLIEEVYNHEANGGLILEGGSTSLLNCMARNSYWSADFRWHIIRHKLPDQETFMKAAKARVKQMLHPAAGHSIIQELVYLWNEPRLRPILKEIDGYRYAMLFASQNQITADMLLQLDANMEGKLINGIAQEYFIHARQQEQKFPQVNAAAFDGFEGHPFGMY.

This sequence belongs to the isopentenyl transferase family.

The enzyme catalyses dimethylallyl diphosphate + AMP = N(6)-(dimethylallyl)adenosine 5'-phosphate + diphosphate. Functionally, transfers dimethylallyl groups to AMP as part of the biosynthesis of cytokinin phytohormones. In Agrobacterium tumefaciens (strain Ach5), this protein is Adenylate dimethylallyltransferase (izt).